The sequence spans 498 residues: Lysine--tRNA ligase (498 aa).

Glu407 and Glu414 together coordinate Mg(2+).

The protein belongs to the class-II aminoacyl-tRNA synthetase family. In terms of assembly, homodimer. Mg(2+) is required as a cofactor.

It is found in the cytoplasm. The catalysed reaction is tRNA(Lys) + L-lysine + ATP = L-lysyl-tRNA(Lys) + AMP + diphosphate. The protein is Lysine--tRNA ligase of Rhizobium etli (strain CIAT 652).